A 462-amino-acid polypeptide reads, in one-letter code: ATP synthase subunit beta (462 aa).

152 to 159 (GGAGVGKT) contributes to the ATP binding site.

This sequence belongs to the ATPase alpha/beta chains family. In terms of assembly, F-type ATPases have 2 components, CF(1) - the catalytic core - and CF(0) - the membrane proton channel. CF(1) has five subunits: alpha(3), beta(3), gamma(1), delta(1), epsilon(1). CF(0) has three main subunits: a(1), b(2) and c(9-12). The alpha and beta chains form an alternating ring which encloses part of the gamma chain. CF(1) is attached to CF(0) by a central stalk formed by the gamma and epsilon chains, while a peripheral stalk is formed by the delta and b chains.

It localises to the cell inner membrane. It carries out the reaction ATP + H2O + 4 H(+)(in) = ADP + phosphate + 5 H(+)(out). Its function is as follows. Produces ATP from ADP in the presence of a proton gradient across the membrane. The catalytic sites are hosted primarily by the beta subunits. The sequence is that of ATP synthase subunit beta from Blochmanniella pennsylvanica (strain BPEN).